A 303-amino-acid polypeptide reads, in one-letter code: Glutathione transport system permease protein GsiD (303 aa).

6 consecutive transmembrane segments (helical) span residues 40–60 (AMTAALFVILLIVVAIFARWI), 105–125 (LAAGVFAVFIGVAIGTLLGLL), 144–164 (LFAFPGILLAIAVVAVLGSGI), 165–185 (ANVIIAVAIFSIPAFARLVRG), 222–242 (IVVFFTMRIGTSIISAASLSF), and 266–286 (VIAPHVAVFPALAIFLTVLAF). Residues 101-290 (AQISLAAGVF…LTVLAFNLLG (190 aa)) form the ABC transmembrane type-1 domain.

The protein belongs to the binding-protein-dependent transport system permease family. In terms of assembly, the complex is composed of two ATP-binding proteins (GsiA), two transmembrane proteins (GsiC and GsiD) and a solute-binding protein (GsiB).

The protein resides in the cell inner membrane. Part of the ABC transporter complex GsiABCD involved in glutathione import. Probably responsible for the translocation of the substrate across the membrane. The protein is Glutathione transport system permease protein GsiD of Shigella flexneri serotype 5b (strain 8401).